Reading from the N-terminus, the 344-residue chain is MIKILGIESSCDDTAVSIITENREILSNIIISQNTEHAVFGGVVPEIAARSHLSHLDKALKNVLKESNTKLTDISTIAATSGPGLIGGVIVGSMFARSLSSALKKPFIAINHLEGHALTARLTDNIPYPYLLLLASGGHCQFVAVLGLGKYKILGSTIDDAVGEAFDKVAKMLNLAFPGGPEIEKRAKLGDPHKYKFPKPIINSGNCNMSFSGLKTAVRTLIINLKEINDTVINDIAASFQFTIGEILSSKVQDAIRAYEQITNNFDKKNIVIAGGVAANKYLQKILSSCAKTYGYRLIYPPIHLCTDNAAMIAYAGLERYNNKLFTPLNFCPKARWSLEDISN.

Fe cation is bound by residues histidine 112 and histidine 116. Substrate is bound by residues 134-138, aspartate 167, glycine 180, and asparagine 280; that span reads LASGG. Aspartate 308 provides a ligand contact to Fe cation.

Belongs to the KAE1 / TsaD family. It depends on Fe(2+) as a cofactor.

The protein localises to the cytoplasm. It catalyses the reaction L-threonylcarbamoyladenylate + adenosine(37) in tRNA = N(6)-L-threonylcarbamoyladenosine(37) in tRNA + AMP + H(+). Its function is as follows. Required for the formation of a threonylcarbamoyl group on adenosine at position 37 (t(6)A37) in tRNAs that read codons beginning with adenine. Is involved in the transfer of the threonylcarbamoyl moiety of threonylcarbamoyl-AMP (TC-AMP) to the N6 group of A37, together with TsaE and TsaB. TsaD likely plays a direct catalytic role in this reaction. The chain is tRNA N6-adenosine threonylcarbamoyltransferase from Rickettsia peacockii (strain Rustic).